The primary structure comprises 379 residues: Homoserine O-succinyltransferase (379 aa).

The region spanning 51–360 (NAVLICHALS…DAPQGHDAFL (310 aa)) is the AB hydrolase-1 domain. Residue Ser-157 is the Nucleophile of the active site. Residue Arg-227 coordinates substrate. Active-site residues include Asp-323 and His-356. Residue Asp-357 participates in substrate binding.

It belongs to the AB hydrolase superfamily. MetX family. In terms of assembly, homodimer.

It is found in the cytoplasm. It carries out the reaction L-homoserine + succinyl-CoA = O-succinyl-L-homoserine + CoA. It participates in amino-acid biosynthesis; L-methionine biosynthesis via de novo pathway; O-succinyl-L-homoserine from L-homoserine: step 1/1. Functionally, transfers a succinyl group from succinyl-CoA to L-homoserine, forming succinyl-L-homoserine. The protein is Homoserine O-succinyltransferase of Pseudomonas syringae pv. tomato (strain ATCC BAA-871 / DC3000).